A 115-amino-acid chain; its full sequence is MIPAKDMAKVMIVMLAICFLTKSDGKSVKKRSVSEIQLMHNLGKHLNSMERVEWLRKKLQDVHNFVALGAPLAPRDAGSQRPRKKEDNVLVESHEKSLGEADKADVNVLTKAKSQ.

The signal sequence occupies residues methionine 1–glycine 25. Residues lysine 26 to arginine 31 constitute a propeptide that is removed on maturation. The tract at residues arginine 51 to glycine 69 is important for receptor binding. Residues alanine 73–glutamine 115 form a disordered region. The segment covering lysine 84 to aspartate 105 has biased composition (basic and acidic residues).

This sequence belongs to the parathyroid hormone family. Interacts with PTH1R (via N-terminal extracellular domain).

It is found in the secreted. Functionally, parathyroid hormone elevates calcium level by dissolving the salts in bone and preventing their renal excretion. Acts by binding to its receptor, PTH1R, activating G protein-coupled receptor signaling. Stimulates [1-14C]-2-deoxy-D-glucose (2DG) transport and glycogen synthesis in osteoblastic cells. This Homo sapiens (Human) protein is Parathyroid hormone.